Here is a 219-residue protein sequence, read N- to C-terminus: Thiamine-phosphate synthase (219 aa).

4-amino-2-methyl-5-(diphosphooxymethyl)pyrimidine is bound by residues 48–52 (QLREK) and Asn-80. Mg(2+) is bound by residues Asp-81 and Asp-100. Ser-119 is a 4-amino-2-methyl-5-(diphosphooxymethyl)pyrimidine binding site. Position 145–147 (145–147 (TPT)) interacts with 2-[(2R,5Z)-2-carboxy-4-methylthiazol-5(2H)-ylidene]ethyl phosphate. Lys-148 lines the 4-amino-2-methyl-5-(diphosphooxymethyl)pyrimidine pocket. 2-[(2R,5Z)-2-carboxy-4-methylthiazol-5(2H)-ylidene]ethyl phosphate contacts are provided by residues Gly-176 and 196 to 197 (VS).

It belongs to the thiamine-phosphate synthase family. Mg(2+) serves as cofactor.

The catalysed reaction is 2-[(2R,5Z)-2-carboxy-4-methylthiazol-5(2H)-ylidene]ethyl phosphate + 4-amino-2-methyl-5-(diphosphooxymethyl)pyrimidine + 2 H(+) = thiamine phosphate + CO2 + diphosphate. It carries out the reaction 2-(2-carboxy-4-methylthiazol-5-yl)ethyl phosphate + 4-amino-2-methyl-5-(diphosphooxymethyl)pyrimidine + 2 H(+) = thiamine phosphate + CO2 + diphosphate. It catalyses the reaction 4-methyl-5-(2-phosphooxyethyl)-thiazole + 4-amino-2-methyl-5-(diphosphooxymethyl)pyrimidine + H(+) = thiamine phosphate + diphosphate. The protein operates within cofactor biosynthesis; thiamine diphosphate biosynthesis; thiamine phosphate from 4-amino-2-methyl-5-diphosphomethylpyrimidine and 4-methyl-5-(2-phosphoethyl)-thiazole: step 1/1. In terms of biological role, condenses 4-methyl-5-(beta-hydroxyethyl)thiazole monophosphate (THZ-P) and 2-methyl-4-amino-5-hydroxymethyl pyrimidine pyrophosphate (HMP-PP) to form thiamine monophosphate (TMP). This is Thiamine-phosphate synthase from Albidiferax ferrireducens (strain ATCC BAA-621 / DSM 15236 / T118) (Rhodoferax ferrireducens).